The sequence spans 117 residues: MSWRGRSTYYWPRPRRYVQPPEMIGPMRPEQFSDEVEPATPEEGEPATQCQDPAAAQKGEDEGASAGQGPKPEAHSQEQGHPQTGCECEDGPDGQEMDPPNPEEVKTPEEGEKQSQC.

Positions 1–117 are disordered; that stretch reads MSWRGRSTYY…PEEGEKQSQC (117 aa). Acidic residues-rich tracts occupy residues 32-45 and 87-96; these read FSDE…EEGE and ECEDGPDGQE. Residues 103–117 are compositionally biased toward basic and acidic residues; it reads EEVKTPEEGEKQSQC.

It belongs to the GAGE family.

This chain is G antigen 12H (GAGE12H), found in Homo sapiens (Human).